The sequence spans 483 residues: Putative (R)-citramalate synthase CimA (483 aa).

Positions 1–245 (MRDGEQTPGV…DTGIKHEQIY (245 aa)) constitute a Pyruvate carboxyltransferase domain.

The protein belongs to the alpha-IPM synthase/homocitrate synthase family. As to quaternary structure, homodimer.

It carries out the reaction pyruvate + acetyl-CoA + H2O = (3R)-citramalate + CoA + H(+). Its pathway is amino-acid biosynthesis; L-isoleucine biosynthesis; 2-oxobutanoate from pyruvate: step 1/3. In terms of biological role, catalyzes the condensation of pyruvate and acetyl-coenzyme A to form (R)-citramalate. The sequence is that of Putative (R)-citramalate synthase CimA from Methanosarcina acetivorans (strain ATCC 35395 / DSM 2834 / JCM 12185 / C2A).